We begin with the raw amino-acid sequence, 107 residues long: Bombesin (107 aa).

The first 26 residues, methionine 1–cysteine 26, serve as a signal peptide directing secretion. Positions methionine 27–leucine 41 are excised as a propeptide. Position 42 is a pyrrolidone carboxylic acid (glutamine 42). Methionine 55 is subject to Methionine amide. The propeptide occupies glycine 56–asparagine 107.

As to expression, expressed by the skin glands.

The protein resides in the secreted. Functionally, stimulates smooth muscle contraction. Role in induction of hypothermia, stimulation of DNA replication and release of many gastrointestinal hormones. Possesses insulin-releasing activity. The polypeptide is Bombesin (Bombina variegata (Yellow-bellied toad)).